A 198-amino-acid chain; its full sequence is Probable molybdenum cofactor guanylyltransferase (198 aa).

GTP is bound by residues 9–11, K22, D66, and D95; that span reads LAG. Mg(2+) is bound at residue D95.

Belongs to the MobA family. The cofactor is Mg(2+).

It localises to the cytoplasm. The catalysed reaction is Mo-molybdopterin + GTP + H(+) = Mo-molybdopterin guanine dinucleotide + diphosphate. In terms of biological role, transfers a GMP moiety from GTP to Mo-molybdopterin (Mo-MPT) cofactor (Moco or molybdenum cofactor) to form Mo-molybdopterin guanine dinucleotide (Mo-MGD) cofactor. In Clostridium perfringens (strain ATCC 13124 / DSM 756 / JCM 1290 / NCIMB 6125 / NCTC 8237 / Type A), this protein is Probable molybdenum cofactor guanylyltransferase.